We begin with the raw amino-acid sequence, 577 residues long: Zinc finger-containing ubiquitin peptidase 1 (577 aa).

The C2H2-type 1 zinc-finger motif lies at 2-24; the sequence is LSCNICGETVNSEPDMKAHLIVH. The C2H2-type 2; atypical zinc-finger motif lies at 29 to 52; sequence IICPFCKLSGINYNEICFHIETVH. Residues 124-137 are compositionally biased toward basic and acidic residues; the sequence is ESRKYQKSREKKPG. Positions 124–145 are disordered; sequence ESRKYQKSREKKPGLSEAQGSI. The C2H2-type 3; atypical zinc finger occupies 153–176; sequence PECPFCGKIEGCSQDMEIHVKTKH. The segment at 192 to 214 adopts a C2H2-type 4 zinc-finger fold; that stretch reads YDCPMCGLVCTNYHILQEHVDLH. The interval 225–247 is MIU; the sequence is DRVQCSSDRELAHRLQQEEDRKR. Residues 238-260 are disordered; it reads RLQQEEDRKRKSEESRQEREEFQ. The interval 248–273 is zUBD/ZHA; sequence KSEESRQEREEFQKLQRQYGLDNSGG. Lys261 is modified (N6-acetyllysine). Cys359 acts as the Nucleophile in catalysis. The active-site Proton acceptor is His490. Asp511 is a catalytic residue.

Belongs to the peptidase C78 family. ZUFSP subfamily. In terms of assembly, interacts with RPA1 and RPA2.

Its subcellular location is the cytoplasm. The protein localises to the nucleus. It catalyses the reaction Thiol-dependent hydrolysis of ester, thioester, amide, peptide and isopeptide bonds formed by the C-terminal Gly of ubiquitin (a 76-residue protein attached to proteins as an intracellular targeting signal).. In terms of biological role, deubiquitinase with endodeubiquitinase activity that specifically interacts with and cleaves 'Lys-63'-linked long polyubiquitin chains. Shows only weak activity against 'Lys-11' and 'Lys-48'-linked chains. Plays an important role in genome stability pathways, functioning to prevent spontaneous DNA damage and also promote cellular survival in response to exogenous DNA damage. Modulates the ubiquitination status of replication protein A (RPA) complex proteins in response to replication stress. The polypeptide is Zinc finger-containing ubiquitin peptidase 1 (Mus musculus (Mouse)).